The chain runs to 217 residues: UPF0502 protein AHA_2872 (217 aa).

It belongs to the UPF0502 family.

This Aeromonas hydrophila subsp. hydrophila (strain ATCC 7966 / DSM 30187 / BCRC 13018 / CCUG 14551 / JCM 1027 / KCTC 2358 / NCIMB 9240 / NCTC 8049) protein is UPF0502 protein AHA_2872.